Reading from the N-terminus, the 220-residue chain is Metalloproteinase inhibitor 2 (220 aa).

An N-terminal signal peptide occupies residues 1–26; it reads MGAAARSLRLALGLLLLATLLRPADA. C27 provides a ligand contact to Zn(2+). 2 involved in metalloproteinase-binding regions span residues 27–30 and 95–96; these read CSCS and SA. 6 disulfides stabilise this stretch: C27-C98, C29-C127, C39-C152, C154-C201, C159-C164, and C172-C193. One can recognise an NTR domain in the interval 27-152; the sequence is CSCSPVHPQQ…SLNHRYQMGC (126 aa).

It belongs to the protease inhibitor I35 (TIMP) family. Interacts (via the C-terminal) with MMP2 (via the C-terminal PEX domain); the interaction inhibits the MMP2 activity. In terms of processing, the activity of TIMP2 is dependent on the presence of disulfide bonds.

It localises to the secreted. Its function is as follows. Complexes with metalloproteinases (such as collagenases) and irreversibly inactivates them by binding to their catalytic zinc cofactor. The polypeptide is Metalloproteinase inhibitor 2 (Timp2) (Rattus norvegicus (Rat)).